An 88-amino-acid polypeptide reads, in one-letter code: U18-hexatoxin-Hi1a (88 aa).

A signal peptide spans 1 to 17 (MRIYSLLILSFLLLASA). The propeptide occupies 18–47 (VLINSAEMPRSEKSLLYSIMQGREDSEEGR). 4 disulfide bridges follow: Cys48-Cys63, Cys55-Cys69, Cys62-Cys81, and Cys71-Cys79.

It belongs to the neurotoxin 07 (Beta/delta-agtx) family. 02 (aga-3) subfamily. As to expression, expressed by the venom gland.

It is found in the secreted. Functionally, weak insecticidal toxin with probable ion channel impairing activity. In vivo, induces paralysis when injected into sheep blowflies (L.cuprina). Shows weak toxicity, since it is only toxic at high doses, and flies recover within 24 hours. The protein is U18-hexatoxin-Hi1a of Hadronyche infensa (Fraser island funnel-web spider).